A 554-amino-acid chain; its full sequence is Hyaluronan synthase 3 (554 aa).

The Cytoplasmic portion of the chain corresponds to 1 to 15 (MPVQLTTALRVVGTS). The chain crosses the membrane as a helical span at residues 16 to 36 (LFALVVLGGILAAYVTGYQFI). The Extracellular portion of the chain corresponds to 37–44 (HTEKHYLS). Residues 45-65 (FGLYGAILGLHLLIQSLFAFL) traverse the membrane as a helical segment. The Cytoplasmic portion of the chain corresponds to 66 to 378 (EHRRMRRAGR…NSLWFHKHHL (313 aa)). The helical transmembrane segment at 379–399 (WMTYESVVTGFFPFFLIATVI) threads the bilayer. Over 400–409 (QLFYRGRIWN) the chain is Extracellular. A helical membrane pass occupies residues 410–430 (ILLFLLTVQLVGIIKATYACF). The Cytoplasmic portion of the chain corresponds to 431 to 441 (LRGNAEMIFMS). The chain crosses the membrane as a helical span at residues 442 to 462 (LYSLLYMSSLLPAKIFAIATI). A glycan (N-linked (GlcNAc...) asparagine) is linked at asparagine 463. Topologically, residues 463 to 474 (NKSGWGTSGRKT) are extracellular. A helical membrane pass occupies residues 475 to 495 (IVVNFIGLIPVSIWVAVLLGG). Topologically, residues 496 to 516 (LAYTAYCQDLFSETELAFLVS) are cytoplasmic. A helical membrane pass occupies residues 517–537 (GAILYGCYWVALLMLYLAIIA). Residues 538–554 (RRCGKKPEQYSLAFAEV) lie on the Extracellular side of the membrane.

It belongs to the NodC/HAS family. Requires Mg(2+) as cofactor. In terms of processing, O-GlcNAcylation increases the hyaluronan synthase activity, HAS3 stability and its plasma membrane residence. The concentration of UDP-GlcNAc controls the level of O-GlcNAc modification.

The protein localises to the cell membrane. The protein resides in the golgi apparatus membrane. Its subcellular location is the golgi apparatus. It localises to the trans-Golgi network membrane. It is found in the cytoplasmic vesicle. The enzyme catalyses [hyaluronan](n) + UDP-N-acetyl-alpha-D-glucosamine = N-acetyl-beta-D-glucosaminyl-(1-&gt;4)-[hyaluronan](n) + UDP + H(+). It carries out the reaction N-acetyl-beta-D-glucosaminyl-(1-&gt;4)-[hyaluronan](n) + UDP-alpha-D-glucuronate = [hyaluronan](n+1) + UDP + H(+). It participates in glycan biosynthesis; hyaluronan biosynthesis. Catalyzes the addition of GlcNAc or GlcUA monosaccharides to the nascent hyaluronan polymer. Therefore, it is essential to hyaluronan synthesis a major component of most extracellular matrices that has a structural role in tissues architectures and regulates cell adhesion, migration and differentiation. This is one of three isoenzymes responsible for cellular hyaluronan synthesis. The sequence is that of Hyaluronan synthase 3 (Has3) from Mus musculus (Mouse).